Here is a 31-residue protein sequence, read N- to C-terminus: MSILINYFLLVGFCFALASGLFLGLKSIKLI.

A helical transmembrane segment spans residues 3-23; it reads ILINYFLLVGFCFALASGLFL.

This sequence belongs to the PetL family. As to quaternary structure, the 4 large subunits of the cytochrome b6-f complex are cytochrome b6, subunit IV (17 kDa polypeptide, PetD), cytochrome f and the Rieske protein, while the 4 small subunits are PetG, PetL, PetM and PetN. The complex functions as a dimer.

It is found in the plastid. The protein localises to the chloroplast thylakoid membrane. Component of the cytochrome b6-f complex, which mediates electron transfer between photosystem II (PSII) and photosystem I (PSI), cyclic electron flow around PSI, and state transitions. PetL is important for photoautotrophic growth as well as for electron transfer efficiency and stability of the cytochrome b6-f complex. This Thalassiosira pseudonana (Marine diatom) protein is Cytochrome b6-f complex subunit 6.